The following is a 645-amino-acid chain: MALASNPRRRLHEVRVQKYVVIAVTWRGAQPMSQRARPSRVVRAAAWGMFARCHPGAAAGWHRCTDLVTRSSARPAYTVASQSFSQGLVEDAPLQNPNTLTYNRVYSKVGNTRILQAEPAVLNFGGYELGKVYSQVLRIRNVRASGTRFHIIPPSTPFFKATCPAKKGLLAPGMTEEVAVEFCPTQYRYYYDCVRVHCEEENLLIPLHAYPVANEALFPTRVDFGRVALGQEVVRSHTLECKVPVDFEYEIVEVKPNPAFRVEPARGVVPGRGRVTVDMWFCPLALTTEEAVIETEVAGVYVPDTMLLSAAEVGLRTKDVRGAIEARKAAAAEQQAALEKGALFRLQLALAEEAARKVALGTAPHSGQQLLTAEQPELEAGGAVHQPSAPVGSSSSGGGGGSDPAFKPEHKRTRVLDKFMRAVWRVVTHQRLQRRLERIKEVLAHLGYDKQRLAEEAANPVLLVSESDRPGTAPTKYLRPEMVRVRPLPLYRDVLFQVHHATDLSHYTDFDELAPFTSKVRERLVPSGLVPPLSDYPTMPDACKNMPYITLEIGNRYGDDRVYGAPDPSYSPYGSLDVDYAVQPRQYDVYDSARHEAVASGGVRSLRGGPGLSDSWLVRQICPAVPTDEQLAKCGGTGIVNTIPN.

The tract at residues 381–408 (GGAVHQPSAPVGSSSSGGGGGSDPAFKP) is disordered. The tract at residues 428-435 (THQRLQRR) is interaction with calmodulin.

Belongs to the PCDP1 family. As to quaternary structure, interacts with calmodulin; calcium-dependent. Part of the PDCP1 complex composed of CFAP46, CFAP54, CFAP74 and CFAP221; the PDCP1 complex binds calmodulin.

The protein resides in the cytoplasm. It localises to the cytoskeleton. It is found in the cilium axoneme. May play a role in cilium morphogenesis. This chain is Cilia- and flagella-associated protein 221 homolog, found in Chlamydomonas reinhardtii (Chlamydomonas smithii).